The sequence spans 152 residues: Small ribosomal subunit protein uS15 (152 aa).

Residues 1–11 (MAKMHTKRKGK) show a composition bias toward basic residues. Residues 1–22 (MAKMHTKRKGKSSSTRPIRTEP) are disordered.

Belongs to the universal ribosomal protein uS15 family. In terms of assembly, part of the 30S ribosomal subunit.

This is Small ribosomal subunit protein uS15 from Methanosarcina barkeri (strain Fusaro / DSM 804).